A 145-amino-acid polypeptide reads, in one-letter code: MAIVIVAFVVFLDQFTKYLAAKYLMPIGSYPVIKHFFHLTYVENRGAAFGMLQNKTLFFIVITVVVGIVLIYSMIKLPENSLYNYTLAMILGGAIGNLIDRVRLGYVVDFIDFKFFPAVFNVADSFIVVGAIILGYLMIFKGGIR.

The next 2 helical transmembrane spans lie at 57-77 and 79-99; these read LFFIVITVVVGIVLIYSMIKL and ENSLYNYTLAMILGGAIGNLI. Catalysis depends on residues Asp109 and Asp124. A helical transmembrane segment spans residues 120–140; the sequence is FNVADSFIVVGAIILGYLMIF.

This sequence belongs to the peptidase A8 family.

The protein localises to the cell membrane. It catalyses the reaction Release of signal peptides from bacterial membrane prolipoproteins. Hydrolyzes -Xaa-Yaa-Zaa-|-(S,diacylglyceryl)Cys-, in which Xaa is hydrophobic (preferably Leu), and Yaa (Ala or Ser) and Zaa (Gly or Ala) have small, neutral side chains.. It functions in the pathway protein modification; lipoprotein biosynthesis (signal peptide cleavage). In terms of biological role, this protein specifically catalyzes the removal of signal peptides from prolipoproteins. In Caldanaerobacter subterraneus subsp. tengcongensis (strain DSM 15242 / JCM 11007 / NBRC 100824 / MB4) (Thermoanaerobacter tengcongensis), this protein is Lipoprotein signal peptidase.